The following is a 338-amino-acid chain: Ketol-acid reductoisomerase (NADP(+)) (338 aa).

The 181-residue stretch at 1-181 folds into the KARI N-terminal Rossmann domain; it reads MTVYYDKDCN…GGGRTAIIET (181 aa). NADP(+) contacts are provided by residues 24–27, Arg-47, Ser-52, and 82–85; these read FGSQ and DENQ. The active site involves His-107. Gly-133 is a binding site for NADP(+). One can recognise a KARI C-terminal knotted domain in the interval 182–327; sequence TFKDETETDL…VKLRTMMPWI (146 aa). Mg(2+)-binding residues include Asp-190, Glu-194, Glu-226, and Glu-230. Residue Ser-251 coordinates substrate.

Belongs to the ketol-acid reductoisomerase family. It depends on Mg(2+) as a cofactor.

It catalyses the reaction (2R)-2,3-dihydroxy-3-methylbutanoate + NADP(+) = (2S)-2-acetolactate + NADPH + H(+). The enzyme catalyses (2R,3R)-2,3-dihydroxy-3-methylpentanoate + NADP(+) = (S)-2-ethyl-2-hydroxy-3-oxobutanoate + NADPH + H(+). It participates in amino-acid biosynthesis; L-isoleucine biosynthesis; L-isoleucine from 2-oxobutanoate: step 2/4. Its pathway is amino-acid biosynthesis; L-valine biosynthesis; L-valine from pyruvate: step 2/4. Its function is as follows. Involved in the biosynthesis of branched-chain amino acids (BCAA). Catalyzes an alkyl-migration followed by a ketol-acid reduction of (S)-2-acetolactate (S2AL) to yield (R)-2,3-dihydroxy-isovalerate. In the isomerase reaction, S2AL is rearranged via a Mg-dependent methyl migration to produce 3-hydroxy-3-methyl-2-ketobutyrate (HMKB). In the reductase reaction, this 2-ketoacid undergoes a metal-dependent reduction by NADPH to yield (R)-2,3-dihydroxy-isovalerate. This Sulfurimonas denitrificans (strain ATCC 33889 / DSM 1251) (Thiomicrospira denitrificans (strain ATCC 33889 / DSM 1251)) protein is Ketol-acid reductoisomerase (NADP(+)).